Here is a 178-residue protein sequence, read N- to C-terminus: CASP-like protein 5A1 (178 aa).

Over residues methionine 1 to valine 11 the composition is skewed to low complexity. Residues methionine 1–glycine 25 are disordered. At methionine 1–threonine 37 the chain is on the cytoplasmic side. A helical membrane pass occupies residues alanine 38–methionine 58. The Extracellular portion of the chain corresponds to alanine 59–serine 69. The helical transmembrane segment at phenylalanine 70 to valine 90 threads the bilayer. Residues aspartate 91 to arginine 105 are Cytoplasmic-facing. Residues alanine 106–cysteine 126 form a helical membrane-spanning segment. Over alanine 127–serine 152 the chain is Extracellular. Residues alanine 153–tryptophan 173 traverse the membrane as a helical segment. The Cytoplasmic portion of the chain corresponds to serine 174–glycine 178.

The protein belongs to the Casparian strip membrane proteins (CASP) family. In terms of assembly, homodimer and heterodimers.

It is found in the cell membrane. The chain is CASP-like protein 5A1 from Oryza sativa subsp. japonica (Rice).